The primary structure comprises 389 residues: Lipid-A-disaccharide synthase (389 aa).

Belongs to the LpxB family.

It catalyses the reaction a lipid X + a UDP-2-N,3-O-bis[(3R)-3-hydroxyacyl]-alpha-D-glucosamine = a lipid A disaccharide + UDP + H(+). The protein operates within bacterial outer membrane biogenesis; LPS lipid A biosynthesis. Its function is as follows. Condensation of UDP-2,3-diacylglucosamine and 2,3-diacylglucosamine-1-phosphate to form lipid A disaccharide, a precursor of lipid A, a phosphorylated glycolipid that anchors the lipopolysaccharide to the outer membrane of the cell. The chain is Lipid-A-disaccharide synthase from Burkholderia cenocepacia (strain HI2424).